A 146-amino-acid polypeptide reads, in one-letter code: Hemoglobin subunit beta (146 aa).

One can recognise a Globin domain in the interval 2–146 (EWTQQERSII…VVFALGRKYH (145 aa)). 2 residues coordinate heme b: H63 and H92.

The protein belongs to the globin family. As to quaternary structure, heterotetramer of two alpha chains and two beta chains. As to expression, red blood cells.

Involved in oxygen transport from gills to the various peripheral tissues. The chain is Hemoglobin subunit beta (hbb) from Thunnus thynnus (Atlantic bluefin tuna).